The following is a 131-amino-acid chain: Large ribosomal subunit protein bL17 (131 aa).

The protein belongs to the bacterial ribosomal protein bL17 family. As to quaternary structure, part of the 50S ribosomal subunit. Contacts protein L32.

This Shewanella oneidensis (strain ATCC 700550 / JCM 31522 / CIP 106686 / LMG 19005 / NCIMB 14063 / MR-1) protein is Large ribosomal subunit protein bL17.